We begin with the raw amino-acid sequence, 262 residues long: Transcription factor bHLH81 (262 aa).

The segment at 1–29 (MQPTSVGSSGGGDDGGGRGGGGGLSRSGL) is disordered. Residues 8–25 (SSGGGDDGGGRGGGGGLS) show a composition bias toward gly residues. Residues 190-240 (CATHPRSIAERVRRTRISDRIRKLQELVPNMDKQTNTADMLEEAVEYVKVL) enclose the bHLH domain.

As to quaternary structure, homodimer. In terms of tissue distribution, expressed in flowers.

Its subcellular location is the nucleus. This Arabidopsis thaliana (Mouse-ear cress) protein is Transcription factor bHLH81 (BHLH81).